The chain runs to 615 residues: Protein translocase subunit SecD (615 aa).

The next 6 membrane-spanning stretches (helical) occupy residues 10 to 30, 452 to 472, 477 to 497, 504 to 524, 546 to 568, and 585 to 605; these read YIML…NLYG, QGLE…IFFY, LIAT…MSLL, MPGI…NVLI, YAGA…IILY, and GVAT…NLLY.

Belongs to the SecD/SecF family. SecD subfamily. In terms of assembly, forms a complex with SecF. Part of the essential Sec protein translocation apparatus which comprises SecA, SecYEG and auxiliary proteins SecDF-YajC and YidC.

It localises to the cell inner membrane. Its function is as follows. Part of the Sec protein translocase complex. Interacts with the SecYEG preprotein conducting channel. SecDF uses the proton motive force (PMF) to complete protein translocation after the ATP-dependent function of SecA. The sequence is that of Protein translocase subunit SecD from Salmonella choleraesuis (strain SC-B67).